Reading from the N-terminus, the 852-residue chain is Potassium voltage-gated channel subfamily KQT member 2 (852 aa).

Over 1–90 the chain is Cytoplasmic; it reads MVQKSRNGGV…LYNVLERPRG (90 aa). Serine 52 carries the post-translational modification Phosphoserine; by PKA. A helical membrane pass occupies residues 91 to 113; that stretch reads WAFIYHAYVFLLVFSCLVLSVFS. Residues 114-123 are Extracellular-facing; it reads TIKEYEKSSE. Residues 124-145 traverse the membrane as a helical segment; that stretch reads GALYILEIVTIVVFGVEYFVRI. Residues 146-163 lie on the Cytoplasmic side of the membrane; it reads WAAGCCCRYRGWRGRLKF. The helical transmembrane segment at 164–183 threads the bilayer; it reads ARKPFCVIDIMVLIASIAVL. Residues 184-196 are Extracellular-facing; it reads AAGSQGNVFATSA. The chain crosses the membrane as a helical; Voltage-sensor span at residues 197–215; the sequence is LRSLRFLQILRMIRMDRRG. Position 214 (arginine 214) interacts with a 1,2-diacyl-sn-glycero-3-phospho-(1D-myo-inositol-4,5-bisphosphate). The Cytoplasmic portion of the chain corresponds to 216 to 227; the sequence is GTWKLLGSVVYA. Residues 222-323 are mediates interaction with SLC5A3; that stretch reads GSVVYAHSKE…SGFALKVQEQ (102 aa). The helical transmembrane segment at 228 to 253 threads the bilayer; the sequence is HSKELVTAWYIGFLCLILASFLVYLA. Lysine 230 contacts a 1,2-diacyl-sn-glycero-3-phospho-(1D-myo-inositol-4,5-bisphosphate). Residues 254-263 are Extracellular-facing; sequence EKGENDHFDT. An intramembrane region (pore-forming) is located at residues 264 to 276; that stretch reads YADALWWGLITLT. The short motif at 277 to 282 is the Selectivity filter element; that stretch reads TIGYGD. The Extracellular portion of the chain corresponds to 277–287; the sequence is TIGYGDKYPQT. A helical transmembrane segment spans residues 288 to 314; the sequence is WNGRLLAATFTLIGVSFFALPAGILGS. The Cytoplasmic segment spans residues 315–852; it reads GFALKVQEQH…GDVAWAGPRK (538 aa). The segment at 317-522 is mediates interaction with calmodulin; sequence ALKVQEQHRQ…EDLTPGLKVS (206 aa). An a 1,2-diacyl-sn-glycero-3-phospho-(1D-myo-inositol-4,5-bisphosphate)-binding site is contributed by lysine 327. A disordered region spans residues 404–469; sequence TFRKEPQPEP…SKVPKSWSFG (66 aa). The span at 440–457 shows a compositional bias: polar residues; it reads PQAQTVRRSPSADQSLDD. Residues serine 448, serine 450, serine 454, serine 458, serine 460, and serine 489 each carry the phosphoserine modification. Disordered stretches follow at residues 579–601, 643–662, and 672–718; these read GPTI…EDPS, GAKE…SRDH, and IVRS…DHGS. Residues 583–592 show a composition bias toward basic and acidic residues; sequence TDKDRTKGPA. Serine 655 carries the post-translational modification Phosphoserine. Residues serine 781 and serine 783 each carry the phosphoserine modification. A disordered region spans residues 818–852; the sequence is ESDTDSDLCTPCGPPPRSATGEGPFGDVAWAGPRK.

It belongs to the potassium channel family. KQT (TC 1.A.1.15) subfamily. Kv7.2/KCNQ2 sub-subfamily. In terms of assembly, heterotetramer with KCNQ3; forms heterotetrameric M-channel responsible for the M-current. Homotetrameric; forms a functional homotetrameric channel resulting in the expression of a small M-current. Interacts with calmodulin; the interaction is calcium-independent, constitutive and participates in the proper assembly of a functional M-channel. May associate with KCNE2. Interacts with IQCJ-SCHIP1. Interacts (via the pore module) with SLC5A3/SMIT1; forms a coregulatory complex that alters ion selectivity, voltage dependence and gating kinetics of the channel. Interacts with AKAP5; the interaction may help KCNQ2 channel complex to retain calcium-bound calmodulin. KCNQ2/KCNQ3 heteromeric current can be increased by intracellular cyclic AMP, an effect that depends on phosphorylation of Ser-52 in the N-terminal region. In terms of processing, KCNQ2/KCNQ3 are ubiquitinated by NEDD4L. Ubiquitination leads to protein degradation. Degradation induced by NEDD4L is inhibited by USP36. In terms of tissue distribution, expressed in brain and sympathetic ganglia. In brain, expressed in cortex, hippocampus, and cerebellum. In sympathetic ganglia, expressed at lower levels in celiac ganglia and superior mesenteric ganglia than in superior cervical ganglia.

Its subcellular location is the cell membrane. It catalyses the reaction K(+)(in) = K(+)(out). It carries out the reaction Rb(+)(in) = Rb(+)(out). The enzyme catalyses Cs(+)(in) = Cs(+)(out). The catalysed reaction is Na(+)(in) = Na(+)(out). With respect to regulation, phosphatidylinositol-4,5-bisphosphate (PIP2) potentiates the activation of KCNQ channels by enhancing the electro-mechanical coupling of the voltage-sensing domain (VSD) and the pore-forming domain (PD). In the closed state of the channel, PIP2 is anchored at the S2-S3 loop; upon channel activation, PIP2 interacts with the S4-S5 linker and is involved in channel gating. Calcium suppresses KCNQ2 and KCNQ2-KCNQ3 channel currents, with calcium-bound calmodulin inducing a change in channel configuration which leads to the reduction of channel affinity for PIP2 and subsequent current suppression. Its function is as follows. Pore-forming subunit of the voltage-gated potassium (Kv) M-channel which is responsible for the M-current, a key controller of neuronal excitability. M-channel is composed of pore-forming subunits KCNQ2 and KCNQ3 assembled as heterotetramers. The native M-current has a slowly activating and deactivating potassium conductance which plays a critical role in determining the subthreshold electrical excitability of neurons as well as the responsiveness to synaptic inputs. M-channel is selectively permeable in vitro to other cations besides potassium, in decreasing order of affinity K(+) &gt; Rb(+) &gt; Cs(+) &gt; Na(+). M-channel association with SLC5A3/SMIT1 alters channel ion selectivity, increasing Na(+) and Cs(+) permeation relative to K(+). Suppressed by activation of the muscarinic acetylcholine receptor CHRM1. This is Potassium voltage-gated channel subfamily KQT member 2 from Rattus norvegicus (Rat).